The primary structure comprises 260 residues: Ribosomal RNA small subunit methyltransferase J (260 aa).

S-adenosyl-L-methionine-binding positions include 108–109, 124–125, and D178; these read RD and ER.

This sequence belongs to the methyltransferase superfamily. RsmJ family.

It localises to the cytoplasm. It carries out the reaction guanosine(1516) in 16S rRNA + S-adenosyl-L-methionine = N(2)-methylguanosine(1516) in 16S rRNA + S-adenosyl-L-homocysteine + H(+). In terms of biological role, specifically methylates the guanosine in position 1516 of 16S rRNA. This Ectopseudomonas mendocina (strain ymp) (Pseudomonas mendocina) protein is Ribosomal RNA small subunit methyltransferase J.